A 195-amino-acid chain; its full sequence is Probable chorismate pyruvate-lyase (195 aa).

Substrate contacts are provided by Arg79, Leu117, and Glu180.

The protein belongs to the UbiC family.

Its subcellular location is the cytoplasm. The enzyme catalyses chorismate = 4-hydroxybenzoate + pyruvate. It functions in the pathway cofactor biosynthesis; ubiquinone biosynthesis. Removes the pyruvyl group from chorismate, with concomitant aromatization of the ring, to provide 4-hydroxybenzoate (4HB) for the ubiquinone pathway. The protein is Probable chorismate pyruvate-lyase of Ralstonia nicotianae (strain ATCC BAA-1114 / GMI1000) (Ralstonia solanacearum).